The following is a 339-amino-acid chain: Uroporphyrinogen decarboxylase (339 aa).

Substrate-binding positions include 21–25, D71, Y146, S201, and H316; that span reads RQAGR.

The protein belongs to the uroporphyrinogen decarboxylase family. In terms of assembly, homodimer.

It is found in the cytoplasm. It carries out the reaction uroporphyrinogen III + 4 H(+) = coproporphyrinogen III + 4 CO2. It participates in porphyrin-containing compound metabolism; protoporphyrin-IX biosynthesis; coproporphyrinogen-III from 5-aminolevulinate: step 4/4. In terms of biological role, catalyzes the decarboxylation of four acetate groups of uroporphyrinogen-III to yield coproporphyrinogen-III. In Rickettsia canadensis (strain McKiel), this protein is Uroporphyrinogen decarboxylase.